A 430-amino-acid polypeptide reads, in one-letter code: Adenylosuccinate synthetase (430 aa).

Residues 12-18 (GDEGKGK) and 40-42 (GHT) each bind GTP. Asp13 (proton acceptor) is an active-site residue. 2 residues coordinate Mg(2+): Asp13 and Gly40. IMP contacts are provided by residues 13–16 (DEGK), 38–41 (NAGH), Thr128, Arg142, Gln223, Thr238, and Arg302. His41 serves as the catalytic Proton donor. Residue 298–304 (VNTGRKR) participates in substrate binding. GTP is bound by residues Arg304, 330 to 332 (KLD), and 412 to 414 (GVG).

The protein belongs to the adenylosuccinate synthetase family. Homodimer. It depends on Mg(2+) as a cofactor.

The protein localises to the cytoplasm. The enzyme catalyses IMP + L-aspartate + GTP = N(6)-(1,2-dicarboxyethyl)-AMP + GDP + phosphate + 2 H(+). It participates in purine metabolism; AMP biosynthesis via de novo pathway; AMP from IMP: step 1/2. In terms of biological role, plays an important role in the de novo pathway of purine nucleotide biosynthesis. Catalyzes the first committed step in the biosynthesis of AMP from IMP. The sequence is that of Adenylosuccinate synthetase from Corynebacterium glutamicum (strain ATCC 13032 / DSM 20300 / JCM 1318 / BCRC 11384 / CCUG 27702 / LMG 3730 / NBRC 12168 / NCIMB 10025 / NRRL B-2784 / 534).